We begin with the raw amino-acid sequence, 486 residues long: tRNA (uracil-5-)-methyltransferase homolog B (486 aa).

Residues Q305, E355, and N405 each contribute to the S-adenosyl-L-methionine site. The active-site Nucleophile is the C433. E479 (proton acceptor) is an active-site residue.

It belongs to the class I-like SAM-binding methyltransferase superfamily. RNA M5U methyltransferase family.

Its subcellular location is the mitochondrion matrix. The catalysed reaction is uridine(54) in tRNA + S-adenosyl-L-methionine = 5-methyluridine(54) in tRNA + S-adenosyl-L-homocysteine + H(+). The enzyme catalyses a uridine in 12S rRNA + S-adenosyl-L-methionine = a 5-methyluridine in 12S rRNA + S-adenosyl-L-homocysteine + H(+). In terms of biological role, mitochondrial S-adenosyl-L-methionine-dependent methyltransferase that catalyzes the formation of 5-methyl-uridine in tRNAs and 12S rRNA. Catalyzes the methylation of uridine at position 54 (m5U54) in all tRNAs. Specifically methylates the uridine in position 429 of 12S rRNA (m5U429). Does not affect RNA stability or mitochondrial translation. In Pongo abelii (Sumatran orangutan), this protein is tRNA (uracil-5-)-methyltransferase homolog B (TRMT2B).